Reading from the N-terminus, the 217-residue chain is Probable GTP-binding protein EngB (217 aa).

One can recognise an EngB-type G domain in the interval 33 to 217 (GPAEIAFAGR…RITIEQAVAR (185 aa)). Residues 41-48 (GRSNVGKS), 68-72 (GRTQE), 95-98 (DMPG), 162-165 (TKTD), and 196-198 (TSS) each bind GTP. Mg(2+) contacts are provided by serine 48 and threonine 70.

This sequence belongs to the TRAFAC class TrmE-Era-EngA-EngB-Septin-like GTPase superfamily. EngB GTPase family. The cofactor is Mg(2+).

Its function is as follows. Necessary for normal cell division and for the maintenance of normal septation. The protein is Probable GTP-binding protein EngB of Sinorhizobium fredii (strain NBRC 101917 / NGR234).